The primary structure comprises 316 residues: Ribosomal RNA large subunit methyltransferase F (316 aa).

This sequence belongs to the methyltransferase superfamily. METTL16/RlmF family.

It is found in the cytoplasm. It catalyses the reaction adenosine(1618) in 23S rRNA + S-adenosyl-L-methionine = N(6)-methyladenosine(1618) in 23S rRNA + S-adenosyl-L-homocysteine + H(+). Specifically methylates the adenine in position 1618 of 23S rRNA. This is Ribosomal RNA large subunit methyltransferase F from Pseudomonas entomophila (strain L48).